The chain runs to 357 residues: Ribosomal RNA large subunit methyltransferase M (357 aa).

Residues serine 183, 216–219, aspartate 235, aspartate 255, and aspartate 271 contribute to the S-adenosyl-L-methionine site; that span reads APGG. The Proton acceptor role is filled by lysine 300.

It belongs to the class I-like SAM-binding methyltransferase superfamily. RNA methyltransferase RlmE family. RlmM subfamily. Monomer.

Its subcellular location is the cytoplasm. The catalysed reaction is cytidine(2498) in 23S rRNA + S-adenosyl-L-methionine = 2'-O-methylcytidine(2498) in 23S rRNA + S-adenosyl-L-homocysteine + H(+). Functionally, catalyzes the 2'-O-methylation at nucleotide C2498 in 23S rRNA. In Pseudomonas fluorescens (strain Pf0-1), this protein is Ribosomal RNA large subunit methyltransferase M.